The primary structure comprises 304 residues: uncharacterized protein (304 aa).

Residues T58 and Y121 each act as charge relay system in the active site. Residue Y147 is the Proton donor of the active site. K175 acts as the Schiff-base intermediate with substrate in catalysis.

It belongs to the DapA family. Homotetramer.

It is found in the cytoplasm. This is an uncharacterized protein from Halobacterium salinarum (strain ATCC 29341 / DSM 671 / R1).